The primary structure comprises 720 residues: MFNYFRKELDLGGRTLVLETGKIARQADGAVLARLGDTIVLCTAVGAKSAKAGQDFFPLTVNYQEKAFAAGKIPGGFFKREGRPSEHETLVSRLIDRPIRPLFPEGFYNEVQVIATVLSHDMENDPDIVALIGCSAALTLSGIPFFGPVAASRVGLVNGAFVLNPTLEQRAESKLDLVVAGTAEGVLMVESEAEELSEDQMLAAVEFGHKGFQPVIDAIIALAEHAARDPWTLPEQNPEHVALKQRLNEAGRTLLGNAYQEKVKQLRQEKISAAKKQIIETLGIGGTPEESIAKSMLKDLEADIVRNAILDTGIRIDGRDTRTVRPIIGEVGILPRAHGSALFTRGETQALCVATLGTGQDEQVVDALTGEYRSHFMLHYNFPPYSVGEAGRMGSPGRREIGHGKLAWRAVHPVLPAKDAFPYTLRVVSEITESNGSSSMATVCGSSLALMDAGVPLKRPVAGIAMGLIKEDRAFAVLSDILGDEDHLGDMDFKVAGTEQGVTSLQMDIKITSITTEIMRIALQQARDGRMHILGEMAKAITGARGSVAATAPRITVINVPKEKIREVIGTGGKVIREIVEFSGAKIDIEDDGTIKIASTSEESTQKAIDRIQGIVAEPEVGKIYNGKVVKTADFGAFVNFLGSRDGLVHISELQQGRVNKTSDVINVGDVVKVKVLGFDDRGKVKLSMRLVDQTTGEDISDKVGPKGGRGGRGEGDLAE.

Residues Asp486 and Asp492 each contribute to the Mg(2+) site. One can recognise a KH domain in the interval 553 to 612; it reads PRITVINVPKEKIREVIGTGGKVIREIVEFSGAKIDIEDDGTIKIASTSEESTQKAIDRI. The S1 motif domain occupies 622–690; it reads GKIYNGKVVK…DRGKVKLSMR (69 aa). The tract at residues 698-720 is disordered; sequence EDISDKVGPKGGRGGRGEGDLAE.

This sequence belongs to the polyribonucleotide nucleotidyltransferase family. Mg(2+) is required as a cofactor.

The protein resides in the cytoplasm. It catalyses the reaction RNA(n+1) + phosphate = RNA(n) + a ribonucleoside 5'-diphosphate. Involved in mRNA degradation. Catalyzes the phosphorolysis of single-stranded polyribonucleotides processively in the 3'- to 5'-direction. The chain is Polyribonucleotide nucleotidyltransferase from Granulibacter bethesdensis (strain ATCC BAA-1260 / CGDNIH1).